Reading from the N-terminus, the 206-residue chain is Alpha-1-acid glycoprotein 3 (206 aa).

An N-terminal signal peptide occupies residues 1 to 18 (MELHTVLIMLSLLPLLEA). N-linked (GlcNAc...) asparagine glycans are attached at residues Asn33, Asn75, and Asn103. Residues Cys90 and Cys183 are joined by a disulfide bond. The tract at residues 187 to 206 (EKKHLELEKETKKDPEESQA) is disordered.

Belongs to the calycin superfamily. Lipocalin family.

The protein resides in the secreted. Functions as a transport protein in the blood stream. Binds various ligands in the interior of its beta-barrel domain. Appears to function in modulating the activity of the immune system during the acute-phase reaction. This is Alpha-1-acid glycoprotein 3 (Orm3) from Mus musculus (Mouse).